We begin with the raw amino-acid sequence, 162 residues long: MKILSVFFLVLFFIIFNKESLAEKTNKETGSGVSSKKKNKKGSGEPLIDVHDLISDMIKKEEELVEVNKRKSKYKLATSVLAGLLGVVSTVLLGGVGLVLYNTEKGRHPFKIGSSDPADNANPDADSESNGEPNADPQVTAQDVTPEQPQGDDNNLVSGPEH.

Residues 1–22 form the signal peptide; that stretch reads MKILSVFFLVLFFIIFNKESLA. A helical membrane pass occupies residues 80-101; sequence VLAGLLGVVSTVLLGGVGLVLY. Residues 109–162 are disordered; sequence PFKIGSSDPADNANPDADSESNGEPNADPQVTAQDVTPEQPQGDDNNLVSGPEH. Over residues 114 to 130 the composition is skewed to low complexity; sequence SSDPADNANPDADSESN. An epitope (deduced) region spans residues 120 to 137; sequence NANPDADSESNGEPNADP. The span at 137–162 shows a compositional bias: polar residues; it reads PQVTAQDVTPEQPQGDDNNLVSGPEH.

The protein resides in the parasitophorous vacuole membrane. The protein is Malaria protein EXP-1 (EXP-1) of Plasmodium falciparum.